Here is a 130-residue protein sequence, read N- to C-terminus: Small ribosomal subunit protein uS9 (130 aa).

It belongs to the universal ribosomal protein uS9 family.

The sequence is that of Small ribosomal subunit protein uS9 from Marinobacter nauticus (strain ATCC 700491 / DSM 11845 / VT8) (Marinobacter aquaeolei).